The sequence spans 261 residues: UPF0328 protein ECU02_0020/ECU04_1700 (261 aa).

The interval 1 to 20 (MSITSIPQPHETNEQHHTEI) is disordered. Residues 11–20 (ETNEQHHTEI) are compositionally biased toward basic and acidic residues.

The protein belongs to the UPF0328 family.

This chain is UPF0328 protein ECU02_0020/ECU04_1700, found in Encephalitozoon cuniculi (strain GB-M1) (Microsporidian parasite).